A 102-amino-acid chain; its full sequence is UPF0213 protein Spro_0507 (102 aa).

A GIY-YIG domain is found at 6 to 81 (PTWHLYMLRM…KQLSKTQKER (76 aa)).

The protein belongs to the UPF0213 family.

The polypeptide is UPF0213 protein Spro_0507 (Serratia proteamaculans (strain 568)).